The chain runs to 1433 residues: DNA polymerase III PolC-type (1433 aa).

Positions F419–L575 constitute an Exonuclease domain.

This sequence belongs to the DNA polymerase type-C family. PolC subfamily.

The protein localises to the cytoplasm. The enzyme catalyses DNA(n) + a 2'-deoxyribonucleoside 5'-triphosphate = DNA(n+1) + diphosphate. Functionally, required for replicative DNA synthesis. This DNA polymerase also exhibits 3' to 5' exonuclease activity. In Halalkalibacterium halodurans (strain ATCC BAA-125 / DSM 18197 / FERM 7344 / JCM 9153 / C-125) (Bacillus halodurans), this protein is DNA polymerase III PolC-type.